A 150-amino-acid chain; its full sequence is SsrA-binding protein (150 aa).

The disordered stretch occupies residues 129–150 (ETEKQRDWQREKSRIMKGGSKE).

The protein belongs to the SmpB family.

Its subcellular location is the cytoplasm. Functionally, required for rescue of stalled ribosomes mediated by trans-translation. Binds to transfer-messenger RNA (tmRNA), required for stable association of tmRNA with ribosomes. tmRNA and SmpB together mimic tRNA shape, replacing the anticodon stem-loop with SmpB. tmRNA is encoded by the ssrA gene; the 2 termini fold to resemble tRNA(Ala) and it encodes a 'tag peptide', a short internal open reading frame. During trans-translation Ala-aminoacylated tmRNA acts like a tRNA, entering the A-site of stalled ribosomes, displacing the stalled mRNA. The ribosome then switches to translate the ORF on the tmRNA; the nascent peptide is terminated with the 'tag peptide' encoded by the tmRNA and targeted for degradation. The ribosome is freed to recommence translation, which seems to be the essential function of trans-translation. This chain is SsrA-binding protein, found in Cupriavidus pinatubonensis (strain JMP 134 / LMG 1197) (Cupriavidus necator (strain JMP 134)).